The primary structure comprises 150 residues: Phosphoribosyl-AMP cyclohydrolase (150 aa).

Residue Asp93 coordinates Mg(2+). Cys94 lines the Zn(2+) pocket. Asp95 and Asp97 together coordinate Mg(2+). Zn(2+)-binding residues include Cys112 and Cys119.

The protein belongs to the PRA-CH family. As to quaternary structure, homodimer. Mg(2+) serves as cofactor. The cofactor is Zn(2+).

The protein resides in the cytoplasm. It catalyses the reaction 1-(5-phospho-beta-D-ribosyl)-5'-AMP + H2O = 1-(5-phospho-beta-D-ribosyl)-5-[(5-phospho-beta-D-ribosylamino)methylideneamino]imidazole-4-carboxamide. It participates in amino-acid biosynthesis; L-histidine biosynthesis; L-histidine from 5-phospho-alpha-D-ribose 1-diphosphate: step 3/9. Functionally, catalyzes the hydrolysis of the adenine ring of phosphoribosyl-AMP. This is Phosphoribosyl-AMP cyclohydrolase from Rhizobium etli (strain ATCC 51251 / DSM 11541 / JCM 21823 / NBRC 15573 / CFN 42).